Consider the following 1217-residue polypeptide: Rho family-interacting cell polarization regulator 1 (1217 aa).

Serine 22 is modified (phosphoserine). A coiled-coil region spans residues 83-112 (RGLTAYLEVHQQEQEKLQRQIKESKRNSRL). Serine 345 and serine 347 each carry phosphoserine. Phosphothreonine is present on threonine 351. The disordered stretch occupies residues 371 to 413 (NGTAWSLSSESSDDSSSPQLSGTARYSSTPKPLVQQPEPLPVQ). Low complexity-rich tracts occupy residues 376-391 (SLSS…PQLS) and 400-413 (PKPL…LPVQ). 2 positions are modified to phosphoserine: serine 452 and serine 455. A disordered region spans residues 565 to 762 (TSTTVGSTHK…SPSSIVPEPQ (198 aa)). Over residues 579–594 (PLTSTGSIPSVTDSIQ) the composition is skewed to polar residues. The span at 595 to 649 (TTTSPTHTTPSPTHTTVSPTHSTPSPTHTTVSPSNAALSPSNATPSLSHSTTSPT) shows a compositional bias: low complexity. Over residues 650-661 (QKATMSTHTTSA) the composition is skewed to polar residues. A compositionally biased stretch (low complexity) spans 664–695 (PVQTTTSPISTTVSPSPSVDTAIISSSSAVPS). A compositionally biased stretch (polar residues) spans 720–729 (ACTSSPSLAS). A Phosphoserine modification is found at serine 742. The stretch at 786-828 (RRLEEALRTLMAALDDYRGQFPELQGLEQEVTRLESLLMQRQG) forms a coiled coil. Residues 850–874 (FLNDDEDEDNDSPGDRPTSSPEVVA) form a disordered region. The span at 852–861 (NDDEDEDNDS) shows a compositional bias: acidic residues. Serine 868 and serine 869 each carry phosphoserine.

It belongs to the RIPOR family. In terms of assembly, interacts (via N-terminus) with RHOA (GTP-bound form); this interaction links active RHOA to STK24 and STK26 kinases. Interacts with RHOB. Interacts with RHOC. Interacts (via C-terminus) with PDCD10; this interaction occurs in a Rho-independent manner. Interacts (via C-terminus) with STK24; this interaction occurs in a PDCD10-dependent and Rho-independent manner. Interacts (via C-terminus) with STK26; this interaction occurs in a PDCD10-dependent and Rho-independent manner. Interacts (via N-terminus) with 14-3-3 proteins; these interactions occur in a Rho-dependent manner.

The protein localises to the cytoplasm. Its subcellular location is the golgi apparatus. Downstream effector protein for Rho-type small GTPases that plays a role in cell polarity and directional migration. Acts as an adapter protein, linking active Rho proteins to STK24 and STK26 kinases, and hence positively regulates Golgi reorientation in polarized cell migration upon Rho activation. Involved in the subcellular relocation of STK26 from the Golgi to cytoplasm punctae in a Rho- and PDCD10-dependent manner upon serum stimulation. The chain is Rho family-interacting cell polarization regulator 1 from Rattus norvegicus (Rat).